We begin with the raw amino-acid sequence, 142 residues long: Large ribosomal subunit protein uL11 (142 aa).

It belongs to the universal ribosomal protein uL11 family. As to quaternary structure, part of the ribosomal stalk of the 50S ribosomal subunit. Interacts with L10 and the large rRNA to form the base of the stalk. L10 forms an elongated spine to which L12 dimers bind in a sequential fashion forming a multimeric L10(L12)X complex. In terms of processing, one or more lysine residues are methylated.

Functionally, forms part of the ribosomal stalk which helps the ribosome interact with GTP-bound translation factors. The chain is Large ribosomal subunit protein uL11 from Mycolicibacterium gilvum (strain PYR-GCK) (Mycobacterium gilvum (strain PYR-GCK)).